The following is a 248-amino-acid chain: Segregation and condensation protein A (248 aa).

The protein belongs to the ScpA family. In terms of assembly, component of a cohesin-like complex composed of ScpA, ScpB and the Smc homodimer, in which ScpA and ScpB bind to the head domain of Smc. The presence of the three proteins is required for the association of the complex with DNA.

The protein localises to the cytoplasm. Participates in chromosomal partition during cell division. May act via the formation of a condensin-like complex containing Smc and ScpB that pull DNA away from mid-cell into both cell halves. The chain is Segregation and condensation protein A from Bacillus cytotoxicus (strain DSM 22905 / CIP 110041 / 391-98 / NVH 391-98).